Consider the following 63-residue polypeptide: Keratin-associated protein 19-7 (63 aa).

This sequence belongs to the KRTAP type 19 family. In terms of assembly, interacts with hair keratins.

Functionally, in the hair cortex, hair keratin intermediate filaments are embedded in an interfilamentous matrix, consisting of hair keratin-associated proteins (KRTAP), which are essential for the formation of a rigid and resistant hair shaft through their extensive disulfide bond cross-linking with abundant cysteine residues of hair keratins. The matrix proteins include the high-sulfur and high-glycine-tyrosine keratins. The chain is Keratin-associated protein 19-7 (KRTAP19-7) from Homo sapiens (Human).